The sequence spans 304 residues: Sulfate adenylyltransferase subunit 2 1 (304 aa).

Belongs to the PAPS reductase family. CysD subfamily. As to quaternary structure, heterodimer composed of CysD, the smaller subunit, and CysN.

The enzyme catalyses sulfate + ATP + H(+) = adenosine 5'-phosphosulfate + diphosphate. It functions in the pathway sulfur metabolism; hydrogen sulfide biosynthesis; sulfite from sulfate: step 1/3. Its function is as follows. With CysN forms the ATP sulfurylase (ATPS) that catalyzes the adenylation of sulfate producing adenosine 5'-phosphosulfate (APS) and diphosphate, the first enzymatic step in sulfur assimilation pathway. APS synthesis involves the formation of a high-energy phosphoric-sulfuric acid anhydride bond driven by GTP hydrolysis by CysN coupled to ATP hydrolysis by CysD. This chain is Sulfate adenylyltransferase subunit 2 1, found in Marinobacter nauticus (strain ATCC 700491 / DSM 11845 / VT8) (Marinobacter aquaeolei).